We begin with the raw amino-acid sequence, 346 residues long: UDP-3-O-acylglucosamine N-acyltransferase (346 aa).

Histidine 253 (proton acceptor) is an active-site residue.

It belongs to the transferase hexapeptide repeat family. LpxD subfamily. In terms of assembly, homotrimer.

It carries out the reaction a UDP-3-O-[(3R)-3-hydroxyacyl]-alpha-D-glucosamine + a (3R)-hydroxyacyl-[ACP] = a UDP-2-N,3-O-bis[(3R)-3-hydroxyacyl]-alpha-D-glucosamine + holo-[ACP] + H(+). It participates in bacterial outer membrane biogenesis; LPS lipid A biosynthesis. Catalyzes the N-acylation of UDP-3-O-acylglucosamine using 3-hydroxyacyl-ACP as the acyl donor. Is involved in the biosynthesis of lipid A, a phosphorylated glycolipid that anchors the lipopolysaccharide to the outer membrane of the cell. In Rickettsia conorii (strain ATCC VR-613 / Malish 7), this protein is UDP-3-O-acylglucosamine N-acyltransferase.